The chain runs to 289 residues: (3R)-3-[(carboxymethyl)amino]fatty acid oxygenase/decarboxylase (289 aa).

Positions 65, 70, and 93 each coordinate a (3R)-3-[(carboxymethyl)amino]fatty acid. Residues His97 and Asp99 each coordinate Fe(2+). 2 residues coordinate a (3R)-3-[(carboxymethyl)amino]fatty acid: Tyr100 and Lys158. His260 lines the Fe(2+) pocket. Position 264 (His264) interacts with 2-oxoglutarate. Residue Arg275 participates in a (3R)-3-[(carboxymethyl)amino]fatty acid binding.

This sequence belongs to the TfdA dioxygenase family. Fe(2+) is required as a cofactor.

It catalyses the reaction a (3R)-3-[(carboxymethyl)amino]fatty acid + 2 2-oxoglutarate + 2 O2 = a (3R)-3-isocyanyl-fatty acid + 2 succinate + 3 CO2 + 2 H2O. The enzyme catalyses a (3R)-3-[(carboxymethyl)amino]fatty acid + 2-oxoglutarate + O2 = a (3R)-3-{[carboxy(hydroxy)methyl]amino}fatty acid + succinate + CO2. The catalysed reaction is a (3R)-3-{[carboxy(hydroxy)methyl]amino}fatty acid + 2-oxoglutarate + O2 = a (3R)-3-isocyanyl-fatty acid + succinate + 2 CO2 + 2 H2O. Its function is as follows. Involved in the biosynthesis of a unique class of isonitrile lipopeptides (INLPs) that seem to play a role in metal acquisition in M.marinum. Catalyzes the conversion of (3R)-3-[(carboxymethyl)amino]fatty acids to (3R)-3-isocyanyl-fatty acids through an oxidative decarboxylation mechanism, thereby generating the isonitrile group of INLPs. This Mycobacterium marinum (strain ATCC BAA-535 / M) protein is (3R)-3-[(carboxymethyl)amino]fatty acid oxygenase/decarboxylase.